The chain runs to 703 residues: Probable ATP-dependent RNA helicase DHX35 (703 aa).

Positions 64–229 constitute a Helicase ATP-binding domain; sequence LYLIENYQTV…FNQNETSDPA (166 aa). 77-84 is an ATP binding site; that stretch reads GETGCGKS. Positions 176 to 179 match the DEAH box motif; sequence DEAH. Positions 261–438 constitute a Helicase C-terminal domain; sequence TVETVVKIHQ…PVILQLKALG (178 aa).

This sequence belongs to the DEAD box helicase family. DEAH subfamily. In terms of assembly, identified in the spliceosome C complex.

It catalyses the reaction ATP + H2O = ADP + phosphate + H(+). In terms of biological role, may be involved in pre-mRNA splicing. The protein is Probable ATP-dependent RNA helicase DHX35 (DHX35) of Homo sapiens (Human).